Consider the following 227-residue polypeptide: Triosephosphate isomerase (227 aa).

6–8 (NLK) serves as a coordination point for substrate. H85 serves as the catalytic Electrophile. E152 acts as the Proton acceptor in catalysis. Substrate contacts are provided by G158 and S188.

Belongs to the triosephosphate isomerase family. As to quaternary structure, homodimer.

It localises to the cytoplasm. The catalysed reaction is D-glyceraldehyde 3-phosphate = dihydroxyacetone phosphate. The protein operates within carbohydrate biosynthesis; gluconeogenesis. It functions in the pathway carbohydrate degradation; glycolysis; D-glyceraldehyde 3-phosphate from glycerone phosphate: step 1/1. Functionally, involved in the gluconeogenesis. Catalyzes stereospecifically the conversion of dihydroxyacetone phosphate (DHAP) to D-glyceraldehyde-3-phosphate (G3P). In Campylobacter concisus (strain 13826), this protein is Triosephosphate isomerase.